A 194-amino-acid chain; its full sequence is Threonylcarbamoyl-AMP synthase (194 aa).

The YrdC-like domain maps to 11 to 194; that stretch reads FRNLMKIINA…GINYKIIRKG (184 aa).

Belongs to the SUA5 family. TsaC subfamily.

It localises to the cytoplasm. It catalyses the reaction L-threonine + hydrogencarbonate + ATP = L-threonylcarbamoyladenylate + diphosphate + H2O. Its function is as follows. Required for the formation of a threonylcarbamoyl group on adenosine at position 37 (t(6)A37) in tRNAs that read codons beginning with adenine. Catalyzes the conversion of L-threonine, HCO(3)(-)/CO(2) and ATP to give threonylcarbamoyl-AMP (TC-AMP) as the acyladenylate intermediate, with the release of diphosphate. In Wigglesworthia glossinidia brevipalpis, this protein is Threonylcarbamoyl-AMP synthase.